The primary structure comprises 420 residues: Mitochondrial chaperone BCS1 (420 aa).

Topologically, residues 1 to 15 (MTLSDFIGALKDNPY) are mitochondrial intermembrane. Residues 16-32 (FGAGFGLVGVGTALAVA) form a helical membrane-spanning segment. The Mitochondrial matrix portion of the chain corresponds to 33–420 (RKGAQVGMIF…AIKNIAEIKD (388 aa)). Position 230 to 237 (230 to 237 (GPPGCGKS)) interacts with ATP.

It belongs to the AAA ATPase family. BCS1 subfamily.

It localises to the mitochondrion inner membrane. It catalyses the reaction ATP + H2O = ADP + phosphate + H(+). In terms of biological role, chaperone necessary for the incorporation of Rieske iron-sulfur protein uqcrfs1 into the mitochondrial respiratory chain complex III. This Danio rerio (Zebrafish) protein is Mitochondrial chaperone BCS1 (bcs1l).